A 970-amino-acid chain; its full sequence is Cullin-4B (970 aa).

Basic and acidic residues predominate over residues 1–14; that stretch reads MSRSTRSKERREND. Disordered stretches follow at residues 1 to 157 and 189 to 211; these read MSRS…SFCL and AEES…QQQQ. Phosphothreonine is present on Thr-15. At Ser-17 the chain carries Phosphoserine. The span at 36 to 57 shows a compositional bias: pro residues; that stretch reads PPRPPYPPLLPPVFPPPTPPPQ. Positions 78–98 are enriched in low complexity; sequence SGFSSPNPSAASAAAQEVRSA. Polar residues predominate over residues 99–109; that stretch reads TDGNTSTTPPT. Residue Thr-106 is modified to Phosphothreonine. Phosphoserine is present on Ser-110. A Nuclear localization signal motif is present at residues 112–115; it reads KKRK. Over residues 117 to 126 the composition is skewed to low complexity; sequence NSSSSSSNSS. Residues 146-155 show a composition bias toward polar residues; sequence DSASPSTSSF. Phosphoserine occurs at positions 154 and 200. The segment covering 192–211 has biased composition (low complexity); that stretch reads SSSSSSSSSPTAATSQQQQQ. At Thr-202 the chain carries Phosphothreonine. Residue Lys-247 forms a Glycyl lysine isopeptide (Lys-Gly) (interchain with G-Cter in ubiquitin) linkage. Phosphoserine is present on Ser-250. The 61-residue stretch at 902–962 folds into the Cullin neddylation domain; that stretch reads DRQYQIDAAI…RDYMERDKEN (61 aa). Residue Lys-916 forms a Glycyl lysine isopeptide (Lys-Gly) (interchain with G-Cter in NEDD8) linkage.

This sequence belongs to the cullin family. As to quaternary structure, component of multiple DCX (DDB1-CUL4-X-box) E3 ubiquitin-protein ligase complexes that seem to be formed of DDB1, CUL4A or CUL4B, RBX1 and a variable substrate recognition component which seems to belong to a protein family described as DCAF (Ddb1- and Cul4-associated factor) or CDW (CUL4-DDB1-associated WD40-repeat) proteins. Component of the DCX(DTL) complex with the putative substrate recognition component DTL. Component of the DCX(DDB2) complex with the putative substrate recognition component DDB2. Component of DCX complexes part of the DesCEND (destruction via C-end degrons) pathway, which contain either TRPC4AP or DCAF12 as substrate-recognition component. Component of the DCX(AMBRA1) complex with the substrate recognition component AMBRA1. Part of a complex with RBX1 and TIP120A/CAND1. Component of the DCX(WDR77) complex, composed of Cul4b, Ddb1, Wdr77 and Rbx1. Interacts with RBX1, GRWD1, MLST8, SMU1, TLE2, TLE3, DCAF1, DDA1, DCAF6, DCAF17, DDB2, DCAF8, TIP120A/CAND1 and TMEM113. Interacts with cyclin E (CCNE1 or CCNE2) and with importins alpha-1 (KPNA2), alpha-3 (KPNA4), alpha-5 (KPNA1) and beta-1 (KPNB1). May interact with WDR26, WDR51B, SNRNP40, WDR61, WDR76 and WDR5. Interacts (unneddylated form) with DCUN1D1, DCUN1D2, DCUN1D3, DCUN1D4 and DCUN1D5; these interactions promote the cullin neddylation. In terms of processing, neddylated. Deneddylated via its interaction with the COP9 signalosome (CSN) complex. Expressed in oocytes (at protein level).

Its subcellular location is the cytoplasm. It is found in the nucleus. The protein operates within protein modification; protein ubiquitination. Functionally, core component of multiple cullin-RING-based E3 ubiquitin-protein ligase complexes which mediate the ubiquitination and subsequent proteasomal degradation of target proteins. The functional specificity of the E3 ubiquitin-protein ligase complex depends on the variable substrate recognition subunit. CUL4B may act within the complex as a scaffold protein, contributing to catalysis through positioning of the substrate and the ubiquitin-conjugating enzyme. Plays a role as part of the E3 ubiquitin-protein ligase complex in polyubiquitination of CDT1, histone H2A, histone H3 and histone H4 in response to radiation-induced DNA damage. Targeted to UV damaged chromatin by DDB2 and may be important for DNA repair and DNA replication. A number of DCX complexes (containing either TRPC4AP or DCAF12 as substrate-recognition component) are part of the DesCEND (destruction via C-end degrons) pathway, which recognizes a C-degron located at the extreme C terminus of target proteins, leading to their ubiquitination and degradation. The DCX(AMBRA1) complex is a master regulator of the transition from G1 to S cell phase by mediating ubiquitination of phosphorylated cyclin-D (CCND1, CCND2 and CCND3). The DCX(AMBRA1) complex also acts as a regulator of Cul5-RING (CRL5) E3 ubiquitin-protein ligase complexes by mediating ubiquitination and degradation of Elongin-C (ELOC) component of CRL5 complexes. Required for ubiquitination of cyclin E (CCNE1 or CCNE2), and consequently, normal G1 cell cycle progression. Component of the DCX(WDR77) complex, which mediates ubiquitination and degradation of Irgm1 in intestinal cells. Regulates the mammalian target-of-rapamycin (mTOR) pathway involved in control of cell growth, size and metabolism. Specific CUL4B regulation of the mTORC1-mediated pathway is dependent upon 26S proteasome function and requires interaction between CUL4B and MLST8. With CUL4A, contributes to ribosome biogenesis. In Mus musculus (Mouse), this protein is Cullin-4B.